The primary structure comprises 555 residues: Energy-dependent translational throttle protein EttA (555 aa).

ABC transporter domains are found at residues 6-259 (YTMH…AQEA) and 324-550 (LEVS…RIKY). 39-46 (GLNGAGKS) contributes to the ATP binding site. Residues 95-139 (SEVVNALKRLDEVYALYADPDADFDKLAAEQGRLEEIIQAHDGHN) form an arm region. Residues 242 to 322 (GNYSSWLEQK…IPPGPRLGDK (81 aa)) are ptIM. 356–363 (GPNGAGKS) is a binding site for ATP.

The protein belongs to the ABC transporter superfamily. ABCF family. Translational throttle EttA subfamily. Monomer. Probably contacts ribosomal proteins L1, L5, L33 and S7, the 16S and 23S rRNA and the P-site containing tRNA(fMet).

The protein resides in the cytoplasm. The enzyme catalyses ATP + H2O = ADP + phosphate + H(+). In terms of biological role, a translation factor that gates the progression of the 70S ribosomal initiation complex (IC, containing tRNA(fMet) in the P-site) into the translation elongation cycle by using a mechanism sensitive to the ATP/ADP ratio. Binds to the 70S ribosome E-site where it modulates the state of the translating ribosome during subunit translocation. ATP hydrolysis probably frees it from the ribosome, which can enter the elongation phase. This Escherichia coli O6:H1 (strain CFT073 / ATCC 700928 / UPEC) protein is Energy-dependent translational throttle protein EttA.